The sequence spans 202 residues: MTAIAIRPEALRDAVAAALGDKVRDIVLALDELTVTVSAADYLAAMQLLRDAPGCRFEQLMDLCGIDYSTYGDVGTEGPRYAVVSHLLSVSLNQRVRVKVFCPDDDFPVVASVSGIWNSANWYEREAFDLYGIVFDGHDDLRRILTDYGFIGHPFRKDFPLSGHVEMRYDTEARRVVYEPVTIEPREITPRIIREEKYGGLH.

This sequence belongs to the complex I 30 kDa subunit family. As to quaternary structure, NDH-1 is composed of 14 different subunits. Subunits NuoB, C, D, E, F, and G constitute the peripheral sector of the complex.

It localises to the cell inner membrane. The enzyme catalyses a quinone + NADH + 5 H(+)(in) = a quinol + NAD(+) + 4 H(+)(out). NDH-1 shuttles electrons from NADH, via FMN and iron-sulfur (Fe-S) centers, to quinones in the respiratory chain. The immediate electron acceptor for the enzyme in this species is believed to be ubiquinone. Couples the redox reaction to proton translocation (for every two electrons transferred, four hydrogen ions are translocated across the cytoplasmic membrane), and thus conserves the redox energy in a proton gradient. This is NADH-quinone oxidoreductase subunit C from Paracidovorax citrulli (strain AAC00-1) (Acidovorax citrulli).